The chain runs to 374 residues: N5-carboxyaminoimidazole ribonucleotide synthase (374 aa).

Residues arginine 108, lysine 148, 153–159 (GYDGKGQ), 183–186 (EKYL), glutamate 191, histidine 214, and 266–267 (NE) each bind ATP. The region spanning 112–296 (KETLKSAGTK…QFDTHILAVT (185 aa)) is the ATP-grasp domain.

This sequence belongs to the PurK/PurT family. In terms of assembly, homodimer.

The enzyme catalyses 5-amino-1-(5-phospho-beta-D-ribosyl)imidazole + hydrogencarbonate + ATP = 5-carboxyamino-1-(5-phospho-D-ribosyl)imidazole + ADP + phosphate + 2 H(+). It participates in purine metabolism; IMP biosynthesis via de novo pathway; 5-amino-1-(5-phospho-D-ribosyl)imidazole-4-carboxylate from 5-amino-1-(5-phospho-D-ribosyl)imidazole (N5-CAIR route): step 1/2. In terms of biological role, catalyzes the ATP-dependent conversion of 5-aminoimidazole ribonucleotide (AIR) and HCO(3)(-) to N5-carboxyaminoimidazole ribonucleotide (N5-CAIR). This chain is N5-carboxyaminoimidazole ribonucleotide synthase, found in Staphylococcus aureus (strain COL).